The chain runs to 490 residues: Transmembrane protease serine 2 (490 aa).

Topologically, residues 1–83 (MALNSGSPPG…ALCTSKSKKS (83 aa)) are cytoplasmic. The helical; Signal-anchor for type II membrane protein transmembrane segment at 84-104 (LCLALALGTVLTGAAVAAVLL) threads the bilayer. Residues 105 to 490 (WRFWDSNCST…WIYQQMRANS (386 aa)) lie on the Extracellular side of the membrane. N-linked (GlcNAc...) asparagine glycosylation is present at asparagine 111. The LDL-receptor class A domain occupies 111-149 (NCSTSEMECGSSGTCISSSLWCDGVAHCPNGEDENRCVR). Intrachain disulfides connect cysteine 112–cysteine 125, cysteine 119–cysteine 138, cysteine 132–cysteine 147, cysteine 171–cysteine 230, cysteine 184–cysteine 240, cysteine 243–cysteine 363, cysteine 279–cysteine 295, cysteine 408–cysteine 424, and cysteine 435–cysteine 463. Ca(2+) contacts are provided by aspartate 133, valine 135, aspartate 143, and glutamate 144. The 93-residue stretch at 150-242 (LYGQSFILQV…RMVVSLRCIE (93 aa)) folds into the SRCR domain. N-linked (GlcNAc...) asparagine glycosylation occurs at asparagine 212. The 234-residue stretch at 254–487 (IVGGLNASPG…FTDWIYQQMR (234 aa)) folds into the Peptidase S1 domain. Catalysis depends on charge relay system residues histidine 294 and aspartate 343. Serine 439 acts as the Charge relay system in catalysis. N-linked (GlcNAc...) asparagine glycosylation occurs at asparagine 474.

This sequence belongs to the peptidase S1 family. In terms of assembly, the catalytically active form interacts with ACE2. Proteolytically processed; by an autocatalytic mechanism. Autocleavage induces active conformation. In terms of tissue distribution, larynx, trachea and bronchi, lung, prostate and kidney.

It localises to the cell membrane. Its subcellular location is the secreted. The enzyme catalyses The enzyme cleaves angiotensin-converting enzyme 2 (EC 3.4.17.23) and cleaves influenzea A and B virus and coronavirus spike glycoproteins at arginine residues.. Functionally, plasma membrane-anchored serine protease that cleaves at arginine residues. Participates in proteolytic cascades of relevance for the normal physiologic function of the prostate. Androgen-induced TMPRSS2 activates several substrates that include pro-hepatocyte growth factor/HGF, the protease activated receptor-2/F2RL1 or matriptase/ST14 leading to extracellular matrix disruption. In addition, activates trigeminal neurons and contribute to both spontaneous pain and mechanical allodynia. Its function is as follows. (Microbial infection) Essential for spread and pathogenesis of influenza A virus (strains H1N1, H3N2 and H7N9) and is involved in proteolytic cleavage and activation of hemagglutinin (HA) protein which is essential for viral infectivity. The sequence is that of Transmembrane protease serine 2 (Tmprss2) from Mus musculus (Mouse).